Reading from the N-terminus, the 325-residue chain is Tetraacyldisaccharide 4'-kinase (325 aa).

58 to 65 is an ATP binding site; the sequence is TVGGSGKT.

This sequence belongs to the LpxK family.

It catalyses the reaction a lipid A disaccharide + ATP = a lipid IVA + ADP + H(+). It participates in glycolipid biosynthesis; lipid IV(A) biosynthesis; lipid IV(A) from (3R)-3-hydroxytetradecanoyl-[acyl-carrier-protein] and UDP-N-acetyl-alpha-D-glucosamine: step 6/6. Its function is as follows. Transfers the gamma-phosphate of ATP to the 4'-position of a tetraacyldisaccharide 1-phosphate intermediate (termed DS-1-P) to form tetraacyldisaccharide 1,4'-bis-phosphate (lipid IVA). The sequence is that of Tetraacyldisaccharide 4'-kinase from Coxiella burnetii (strain RSA 331 / Henzerling II).